The chain runs to 475 residues: DNA-binding protein D-ETS-6 (475 aa).

The interval 42–150 is disordered; sequence SIGSGNETKL…VSPVEVPVDP (109 aa). Over residues 70 to 108 the composition is skewed to low complexity; it reads SSSSTSDSSASSYSSTDSDSGSSTSSSSIRSQLPALNLP. A compositionally biased stretch (pro residues) spans 109-121; it reads VPLPLATPTPPAV. Low complexity predominate over residues 122-144; that stretch reads SSPHQAPSPRRNSSDSNRSVSPV. The PNT domain occupies 132 to 219; the sequence is RNSSDSNRSV…QHFAISLYHA (88 aa). The ETS DNA-binding region spans 255–335; it reads IQLWQFLLEL…HGKRYAYKFD (81 aa). Positions 350-475 are disordered; it reads GDPASSMLGS…PVTPTTNAFN (126 aa). A compositionally biased stretch (basic residues) spans 375-388; the sequence is PPLHHHPQHSHPHH. The segment covering 401–436 has biased composition (low complexity); the sequence is SSPASNSSSLGFPSSSTASSQASPGQAPASSSASTS. Polar residues predominate over residues 453-475; the sequence is RTSTSSAGNYDQGPVTPTTNAFN.

The protein belongs to the ETS family. As to expression, embryonic ventral nervous system and 1 pair of neurons in each thoracic segment.

The protein resides in the nucleus. The protein is DNA-binding protein D-ETS-6 (Ets21C) of Drosophila melanogaster (Fruit fly).